The sequence spans 148 residues: Aspartate carbamoyltransferase regulatory chain (148 aa).

4 residues coordinate Zn(2+): Cys-106, Cys-111, Cys-134, and Cys-137.

The protein belongs to the PyrI family. As to quaternary structure, contains catalytic and regulatory chains. Zn(2+) is required as a cofactor.

Its function is as follows. Involved in allosteric regulation of aspartate carbamoyltransferase. This is Aspartate carbamoyltransferase regulatory chain from Methanococcus vannielii (strain ATCC 35089 / DSM 1224 / JCM 13029 / OCM 148 / SB).